The chain runs to 265 residues: MNAPIGVIDSGVGGLTVAKEIIKRLPNETIYYIGDTARCPYGPRTRQEVRNFTWQMAKALEKMNIKMLVIACNTATAVALESLQRNMPFPVLGVINRGARAAVKKTKRHEVVVLATEGTIKSGAYEEALLSLNTSTHIIPLACPTFVPLVESGEYKGQFANNLIAEGLKPLKNEQFDTVILGCTHYPILQKQIEAVVGEDVFVLSSAEETAKDVEEMLAYNGTLADTNAKPAHKFYATGSVPIFRSIAENWLEQGTLDIHRITLK.

Residues Asp9–Ser10 and Tyr41–Gly42 each bind substrate. The active-site Proton donor/acceptor is Cys72. Asn73–Thr74 contributes to the substrate binding site. Cys183 functions as the Proton donor/acceptor in the catalytic mechanism. Residue Thr184–His185 coordinates substrate.

It belongs to the aspartate/glutamate racemases family.

It catalyses the reaction L-glutamate = D-glutamate. The protein operates within cell wall biogenesis; peptidoglycan biosynthesis. Functionally, provides the (R)-glutamate required for cell wall biosynthesis. In Lysinibacillus sphaericus (Bacillus sphaericus), this protein is Glutamate racemase.